We begin with the raw amino-acid sequence, 423 residues long: Serine hydroxymethyltransferase (423 aa).

(6S)-5,6,7,8-tetrahydrofolate contacts are provided by residues L126 and 130-132 (GHL). K235 is modified (N6-(pyridoxal phosphate)lysine).

This sequence belongs to the SHMT family. Homodimer. Requires pyridoxal 5'-phosphate as cofactor.

Its subcellular location is the cytoplasm. It carries out the reaction (6R)-5,10-methylene-5,6,7,8-tetrahydrofolate + glycine + H2O = (6S)-5,6,7,8-tetrahydrofolate + L-serine. It functions in the pathway one-carbon metabolism; tetrahydrofolate interconversion. It participates in amino-acid biosynthesis; glycine biosynthesis; glycine from L-serine: step 1/1. Catalyzes the reversible interconversion of serine and glycine with tetrahydrofolate (THF) serving as the one-carbon carrier. This reaction serves as the major source of one-carbon groups required for the biosynthesis of purines, thymidylate, methionine, and other important biomolecules. Also exhibits THF-independent aldolase activity toward beta-hydroxyamino acids, producing glycine and aldehydes, via a retro-aldol mechanism. The protein is Serine hydroxymethyltransferase of Sorangium cellulosum (strain So ce56) (Polyangium cellulosum (strain So ce56)).